The sequence spans 1060 residues: MKGSRTITATPEGSPEAVDLSLIGLPPPMSQRPGSASATRSIFRSMSVATGSEPRKKALEATGPGGPRAINNLRRSNSTTQVNQSWTGSPRPAEPTDFLMLFEGSTSGRRRVASLSKASSEKEATWNVLDEQPRGLALPASAQSPSTLDSALGPRRKECPLAPSFTANNRSNKGAVGNCVTTMVHNHYASSKMVSPPKSSNQTAPSLNNIVKAAAREGGEGSDLGKPRKNLSSASQSARGTTGLLRRREVTEEEAERFIHQVNQAAVTIQRWYRCQVQRRRAGAAALEHLLASKREGQRQRLGGGNLLELHRQEEAARKKAREEKARQARQAAIQVLQQKRAQKASEAEHRRPKDRPETRAPEQPRPMQEPGCVTHPKANNAGASIYPTGPADPCPPASESSPEQWQSPEDKPQDIHSQGEARQDLAVSGSSRGKARARATLDDLLDTLKLLEEEPEPLPHPKAYHKDRYAWTDEEEDANSLTADNLEKFGKLSAAPGPPDDGTLLSEAKLQSIMTFLDEMEKSGQERPAPWRESLVLEAGSGSEGSTSVMRLKLELEEKKQAMALLQRALAQQRDLTVRRVKETEKELTRQLRQQKEQYEATIQRHLSFIDQLIEDKKVLSEKCEAVVAELKHGDQRCRERVAQMQEQHELEIKKLKELMSATEKIRREKWINEKTKKIKEITVRGLEPEIQKLIAKHKQEVRRLRGLHEAELQQREEQAAQRHLRQAEELRQHLDREREVLGQQERERAQQRFEQHLEQEQRALEQQRRRLYNEVAEEKERLGQQAARQRAELEELRQQLEESSAALTRALRAEFERSREEQERRHQMELKALKDQLEAERQAWVASCAKKEEAWLLTRERELKEEIRKGRDQEIELVIHRLEADMTLAKEESERAAESRVKRVRDKYETELSELEQSERKLQERCSELKGRLGEAEGEKERLQSLVRQKEKELEDLRAVNTQMCSERASLAQVVRQEFAEQLAASQEETQRVKVELAELQARQQVELDEVHRRVKTALARKEAAVNSLRKQHEAAVKRADHLEELLEQHKGSSLSSK.

The segment covering 1–11 has biased composition (polar residues); that stretch reads MKGSRTITATP. Residues 1 to 96 are disordered; the sequence is MKGSRTITAT…TGSPRPAEPT (96 aa). Residues 1-244 form an interaction with PLK4 region; that stretch reads MKGSRTITAT…SQSARGTTGL (244 aa). Phosphoserine occurs at positions 14 and 35. Composition is skewed to polar residues over residues 32–50 and 73–88; these read RPGSASATRSIFRSMSVAT and LRRSNSTTQVNQSWTG. The residue at position 47 (S47) is a Phosphoserine; by MAPKAPK2. Position 78 is a phosphoserine; by MAPKAPK2 and PLK4 (S78). 5 positions are modified to phosphoserine: S89, S105, S114, S146, and S150. Disordered regions lie at residues 136–155 and 217–248; these read LALPASAQSPSTLDSALGPR and EGGEGSDLGKPRKNLSSASQSARGTTGLLRRR. A compositionally biased stretch (basic and acidic residues) spans 217 to 226; that stretch reads EGGEGSDLGK. One can recognise an IQ domain in the interval 263–283; it reads NQAAVTIQRWYRCQVQRRRAG. Basic and acidic residues-rich tracts occupy residues 314–327 and 344–363; these read EEAARKKAREEKAR and KASEAEHRRPKDRPETRAPE. The disordered stretch occupies residues 314–437; the sequence is EEAARKKARE…VSGSSRGKAR (124 aa). Residues 398 to 408 show a composition bias toward low complexity; that stretch reads ASESSPEQWQS. The span at 409-424 shows a compositional bias: basic and acidic residues; it reads PEDKPQDIHSQGEARQ. T473 carries the post-translational modification Phosphothreonine. S481 is modified (phosphoserine).

This sequence belongs to the CEP131 family. In terms of assembly, self-associates. Associates with the centriolar satellite BBSome protein complex Interacts with BBS4; the interaction limits BBS4 availability for association with the BBSome complex, and hence negatively regulates ciliary localization of the BBSome complex. Interacts with MIB1. Interacts with PCM1; the interaction increases in response to ultraviolet light (UV) radiation. Associates with microtubule; association to microtubule is reduced in response to cellular stress, such as UV stimulation, in a process that requires p38 MAP kinase signaling. Interacts with CEP290, DCTN1, MAP1LC3B, PCNT, PCM1 and CEP152. Interacts with 14-3-3 proteins following UV-induced phosphorylation by MAPKAPK2; this inhibits formation of novel centriolar satellites. Interacts with SDCCAG8. Interacts with CCDC61. Interacts with PLK4. Ubiquitinated. Undergoes monoubiquitination catalyzed by the E3 ubiquitin-protein ligase MIB1 in proliferating cells, preventing cilia formation. Monoubiquitination by MIB1 is inhibited in response to cellular stress, such as ultraviolet light (UV) radiation or heat shock, resulting in ciliogenesis restoration. In terms of processing, MAPKAPK2-dependent phosphorylation at Ser-47 and Ser-78 occurs in response to cellular stress such as exposure to ultraviolet irradiation and promotes binding to 14-3-3 proteins which leads to cytoplasmic sequestration of CEP131 and blocks formation of new centriolar satellites. Phosphorylation at Ser-78 mediated by PLK4 is essential for proper organization and integrity of centriolar satellites but is dispensable for its localization to centrioles and its function in ciliogenesis. In terms of tissue distribution, localized to the pre-acrosome region of round and elongated spermatids in testis but also present in ovary, brain and adipose tissue.

The protein resides in the cytoplasm. The protein localises to the cytoskeleton. It is found in the microtubule organizing center. It localises to the centrosome. Its subcellular location is the centriolar satellite. The protein resides in the centriole. The protein localises to the cilium basal body. It is found in the cytoplasmic vesicle. It localises to the secretory vesicle. Its subcellular location is the acrosome. In terms of biological role, component of centriolar satellites contributing to the building of a complex and dynamic network required to regulate cilia/flagellum formation. In proliferating cells, MIB1-mediated ubiquitination induces its sequestration within centriolar satellites, precluding untimely cilia formation initiation. In contrast, during normal and ultraviolet or heat shock cellular stress-induced ciliogenesis, its non-ubiquitinated form is rapidly displaced from centriolar satellites and recruited to centrosome/basal bodies in a microtubule- and p38 MAPK-dependent manner. Also acts as a negative regulator of BBSome ciliary trafficking. Plays a role in sperm flagellar formation; may be involved in the regulation of intraflagellar transport (IFT) and/or intramanchette (IMT) trafficking, which are important for axoneme extension and/or cargo delivery to the nascent sperm tail. Required for optimal cell proliferation and cell cycle progression; may play a role in the regulation of genome stability and centriole duplication in non-ciliogenic cells. Involved in centriole duplication. Required for CEP152, WDR62 and CEP63 centrosomal localization and promotes the centrosomal localization of CDK2. Essential for maintaining proper centriolar satellite integrity. The protein is Centrosomal protein of 131 kDa (Cep131) of Mus musculus (Mouse).